The primary structure comprises 610 residues: Sodium-coupled monocarboxylate transporter 1 (610 aa).

Residues 1 to 9 (MDTPRGIGT) lie on the Extracellular side of the membrane. Residues 10 to 30 (FVVWDYVVFAGMLVISAAIGI) form a helical membrane-spanning segment. Residues 31–51 (YYAFAGGGQQTSKDFLMGGRR) lie on the Cytoplasmic side of the membrane. Residues 52 to 72 (MTAVPVALSLTASFMSAVTVL) traverse the membrane as a helical segment. Residues 73–83 (GTPSEVYRFGA) are Extracellular-facing. The chain crosses the membrane as a helical span at residues 84–104 (IFSIFAFTYFFVVVISAEVFL). At 105–132 (PVFYKLGITSTYEYLELRFNKCVRLCGT) the chain is on the cytoplasmic side. A helical membrane pass occupies residues 133–153 (VLFIVQTILYTGIVIYAPALA). Topologically, residues 154–161 (LNQVTGFD) are extracellular. A helical transmembrane segment spans residues 162-182 (LWGAVVATGVVCTFYCTLGGL). Residues 183–189 (KAVIWTD) lie on the Cytoplasmic side of the membrane. A helical membrane pass occupies residues 190–210 (VFQVGIMVAGFASVIIQAVVM). Over 211–239 (QGGISTILNDAYDGGRLNFWNFNPNPLQR) the chain is Extracellular. A helical transmembrane segment spans residues 240 to 260 (HTFWTIIIGGTFTWTSIYGVN). Over 261-279 (QSQVQRYISCKSRFQAKLS) the chain is Cytoplasmic. Residues 280–300 (LYINLVGLWAILTCSVFCGLA) traverse the membrane as a helical segment. Residues 301–336 (LYSRYHDCDPWTAKKVSAPDQLMPYLVLDILQDYPG) are Extracellular-facing. The chain crosses the membrane as a helical span at residues 337–359 (LPGLFVACAYSGTLSTVSSSINA). The Cytoplasmic portion of the chain corresponds to 360–389 (LAAVTVEDLIKPYFRSLSERSLSWISQGMS). The helical transmembrane segment at 390-410 (VVYGALCIGMAALASLMGALL) threads the bilayer. Over 411–415 (QAALS) the chain is Extracellular. Residues 416–436 (VFGMVGGPLMGLFALGILVPF) form a helical membrane-spanning segment. Residues 437–439 (ANS) are Cytoplasmic-facing. The helical transmembrane segment at 440–460 (IGALVGLMAGFAISLWVGIGA) threads the bilayer. Residues 461 to 518 (QIYPPLPERTLPLHLDIQGCNSTYNETNLMTTTEMPFTTSVFQIYNVQRTPLMDNWYS) lie on the Extracellular side of the membrane. N-linked (GlcNAc...) asparagine glycosylation is present at N485. The helical transmembrane segment at 519 to 539 (LSYLYFSTVGTLVTLLVGILV) threads the bilayer. Residues 540-610 (SLSTGGRKQN…QSGKSNGTRL (71 aa)) are Cytoplasmic-facing. Positions 585 to 610 (GGTDNPAFNHIELNSDQSGKSNGTRL) are disordered. Residues 596–610 (ELNSDQSGKSNGTRL) are compositionally biased toward polar residues. A PDZ-binding motif is present at residues 608 to 610 (TRL).

Belongs to the sodium:solute symporter (SSF) (TC 2.A.21) family. Interacts (via PDZ-binding motif) with PDZK1 (via PDZ domains 1 and 3); interaction increases nicotinate transport activity of SLC5A8. Expressed in normal thyroid, localized at the apical pole of thyroid cells facing the colloid lumen, but expression profoundly decreased in thyroid carcinomas. Expressed in normal colon but absent in colon aberrant crypt foci and colon cancers. Present in normal kidney cortex, brain, prostate, gastric mucosa and breast tissue but was significantly down-regulated in primary gliomas, gastric cancer, prostate tumors and breast tumors.

The protein localises to the apical cell membrane. It catalyses the reaction (S)-lactate(out) + 2 Na(+)(out) = (S)-lactate(in) + 2 Na(+)(in). The catalysed reaction is propanoate(out) + 2 Na(+)(out) = propanoate(in) + 2 Na(+)(in). The enzyme catalyses pyruvate(out) + 2 Na(+)(out) = pyruvate(in) + 2 Na(+)(in). It carries out the reaction acetate(out) + 2 Na(+)(out) = acetate(in) + 2 Na(+)(in). It catalyses the reaction butanoate(out) + 2 Na(+)(out) = butanoate(in) + 2 Na(+)(in). The catalysed reaction is nicotinate(out) + 2 Na(+)(out) = nicotinate(in) + 2 Na(+)(in). The enzyme catalyses (R)-3-hydroxybutanoate(out) + 2 Na(+)(out) = (R)-3-hydroxybutanoate(in) + 2 Na(+)(in). It carries out the reaction acetoacetate(out) + 2 Na(+)(out) = acetoacetate(in) + 2 Na(+)(in). It catalyses the reaction 4-methyl-2-oxopentanoate(out) + 2 Na(+)(out) = 4-methyl-2-oxopentanoate(in) + 2 Na(+)(in). The catalysed reaction is 5-oxo-L-proline(out) + 2 Na(+)(out) = 5-oxo-L-proline(in) + 2 Na(+)(in). The enzyme catalyses iodide(out) = iodide(in). It carries out the reaction chloride(in) = chloride(out). It catalyses the reaction nitrate(in) = nitrate(out). The catalysed reaction is bromide(in) = bromide(out). Increase of iodide influx inhibited by addition of perchlorate (NaClO(4)), a competitive inhibitor of iodide uptake catalyzed by sodium iodide symporter (NIS). Cotransport of monocarboxylates and nicotinate strongly inhibited by probenecid, nonsteroid anti-inflammatory drugs (ibuprofen, fenoprofen, ketprofen, naproxen) in a Na(+)-dependent manner or by prolonged exposure to external concentrations of monocarboxylates. Acts as an electrogenic sodium (Na(+)) and chloride (Cl-)-dependent sodium-coupled solute transporter, including transport of monocarboxylates (short-chain fatty acids including L-lactate, D-lactate, pyruvate, acetate, propionate, valerate and butyrate), mocarboxylate drugs (nicotinate, benzoate, salicylate and 5-aminosalicylate) and ketone bodies (beta-D-hydroxybutyrate, acetoacetate and alpha-ketoisocaproate), with a Na(+):substrate stoichiometry of between 4:1 and 2:1. Catalyzes passive carrier mediated diffusion of iodide. Mediates iodide transport from the thyrocyte into the colloid lumen through the apical membrane. May be responsible for the absorption of D-lactate and monocarboxylate drugs from the intestinal tract. Acts as a tumor suppressor, suppressing colony formation in colon cancer, prostate cancer and glioma cell lines. May play a critical role in the entry of L-lactate and ketone bodies into neurons by a process driven by an electrochemical Na(+) gradient and hence contribute to the maintenance of the energy status and function of neurons. Mediates sodium-coupled electrogenic transport of pyroglutamate (5-oxo-L-proline). Can mediate the transport of chloride, bromide, iodide and nitrate ions when the external concentration of sodium ions is reduced. The protein is Sodium-coupled monocarboxylate transporter 1 of Homo sapiens (Human).